We begin with the raw amino-acid sequence, 547 residues long: MAAKDVKFSGDARDRMLRGVDVLANAVKVTLGPKGRNVLIEKSFGAPRITKDGVTVAKEVELEDKFENMGAQMVREVASKTNDLAGDGTTTATVLAQAIVREGAKAVAAGMNPMDLKRGIEIAVAAVVKDIQKRAKPVASSAEIAQVGTISANGDAPIGKMIAQAMQKVGNEGVITVEENKSLETEVDIVEGMKFDRGYLSPYFVTNAEKMTVELDDAYILLHEKKLSGLQSMLPVLEAVVQSGKPLLIIAEDVEGEALATLVVNRLRGGLKVSAVKAPGFGDRRKAMLEDIAILTGGQLISEDLGIKLETVTLKMLGRAKKVVIDKENTTIVNGAGKKPEIEARVSQIKAQIEETSSDYDREKLQERLAKLAGGVAVIRVGGATEVEVKEKKDRVEDALNATRAAVQEGIVPGGGVALLRAKKAVGRISNDNPDVQAGINIVLKALEAPIRQIAENAGVEGSIVVGKILENKTETFGFDAQTEEYVDMLAKGIVDPAKVVRTALQDASSVASLLVTTEAMVAELPKADAPAMPAGGGMGGMGGMGF.

ATP is bound by residues 30–33 (TLGP), Lys-51, 87–91 (DGTTT), Gly-415, and Asp-496.

The protein belongs to the chaperonin (HSP60) family. As to quaternary structure, forms a cylinder of 14 subunits composed of two heptameric rings stacked back-to-back. Interacts with the co-chaperonin GroES.

It localises to the cytoplasm. The catalysed reaction is ATP + H2O + a folded polypeptide = ADP + phosphate + an unfolded polypeptide.. In terms of biological role, together with its co-chaperonin GroES, plays an essential role in assisting protein folding. The GroEL-GroES system forms a nano-cage that allows encapsulation of the non-native substrate proteins and provides a physical environment optimized to promote and accelerate protein folding. This Rhodopseudomonas palustris (strain ATCC BAA-98 / CGA009) protein is Chaperonin GroEL 1.